A 61-amino-acid polypeptide reads, in one-letter code: Small ribosomal subunit protein uS14 (61 aa).

Zn(2+) is bound by residues cysteine 24, cysteine 27, cysteine 40, and cysteine 43.

Belongs to the universal ribosomal protein uS14 family. Zinc-binding uS14 subfamily. In terms of assembly, part of the 30S ribosomal subunit. Contacts proteins S3 and S10. Requires Zn(2+) as cofactor.

Functionally, binds 16S rRNA, required for the assembly of 30S particles and may also be responsible for determining the conformation of the 16S rRNA at the A site. The polypeptide is Small ribosomal subunit protein uS14 (Dictyoglomus turgidum (strain DSM 6724 / Z-1310)).